The sequence spans 277 residues: Hemin import ATP-binding protein HmuV (277 aa).

In terms of domain architecture, ABC transporter spans 19 to 259 (VEVADLNYSV…AIIEEAFGHR (241 aa)). Residue 51-58 (GRNGAGKS) coordinates ATP.

The protein belongs to the ABC transporter superfamily. Heme (hemin) importer (TC 3.A.1.14.5) family. As to quaternary structure, the complex is composed of two ATP-binding proteins (HmuV), two transmembrane proteins (HmuU) and a solute-binding protein (HmuT).

It localises to the cell membrane. Functionally, part of the ABC transporter complex HmuTUV involved in hemin import. Responsible for energy coupling to the transport system. The chain is Hemin import ATP-binding protein HmuV from Deinococcus geothermalis (strain DSM 11300 / CIP 105573 / AG-3a).